Here is a 323-residue protein sequence, read N- to C-terminus: tRNA dimethylallyltransferase (323 aa).

12–19 contributes to the ATP binding site; the sequence is GPTAAGKT. Substrate is bound at residue 14-19; the sequence is TAAGKT. Interaction with substrate tRNA stretches follow at residues 37–40 and 161–165; these read DSAL and QRLIR.

The protein belongs to the IPP transferase family. Monomer. Mg(2+) is required as a cofactor.

The enzyme catalyses adenosine(37) in tRNA + dimethylallyl diphosphate = N(6)-dimethylallyladenosine(37) in tRNA + diphosphate. Its function is as follows. Catalyzes the transfer of a dimethylallyl group onto the adenine at position 37 in tRNAs that read codons beginning with uridine, leading to the formation of N6-(dimethylallyl)adenosine (i(6)A). The protein is tRNA dimethylallyltransferase of Pseudomonas putida (strain GB-1).